Here is a 965-residue protein sequence, read N- to C-terminus: 26S proteasome non-ATPase regulatory subunit 1 (965 aa).

8 PC repeats span residues 380-413 (NAVA…EGFG), 418-452 (GAML…EPVR), 454-488 (GACL…VSGE), 489-523 (SAGI…DKTQ), 560-595 (TGIC…DVKR), 630-664 (GAAM…FVRK), 665-706 (GALL…SLVK), and 708-738 (GAII…DMGS). The segment covering 836 to 856 (ASASSAAAAPSSSSTSGTAPA) has biased composition (low complexity). Disordered regions lie at residues 836–889 (ASAS…LQNP) and 943–965 (TPAS…INDF). A compositionally biased stretch (basic and acidic residues) spans 863–882 (EVDQPGKSKKEKAPEKDTKP).

This sequence belongs to the proteasome subunit S1 family.

Its function is as follows. Acts as a regulatory subunit of the 26 proteasome which is involved in the ATP-dependent degradation of ubiquitinated proteins. The sequence is that of 26S proteasome non-ATPase regulatory subunit 1 (rpn-2) from Caenorhabditis elegans.